The chain runs to 145 residues: MIALIQRVTRASVTVEDEVTGKIGPGLLVLLGVEKEDDEQKANRLCERVLGYRIFSDADGKMNLNVQQAGGSVLVVSQFTLAADTERGMRPSFSGGAAPDRAQALYEYFVERCRQQAINTQTGRFAADMQVELVNDGPVTFWLQV.

The short motif at 137–138 is the Gly-cisPro motif, important for rejection of L-amino acids element; it reads GP.

This sequence belongs to the DTD family. Homodimer.

It is found in the cytoplasm. The catalysed reaction is glycyl-tRNA(Ala) + H2O = tRNA(Ala) + glycine + H(+). It carries out the reaction a D-aminoacyl-tRNA + H2O = a tRNA + a D-alpha-amino acid + H(+). Its function is as follows. An aminoacyl-tRNA editing enzyme that deacylates mischarged D-aminoacyl-tRNAs. Also deacylates mischarged glycyl-tRNA(Ala), protecting cells against glycine mischarging by AlaRS. Acts via tRNA-based rather than protein-based catalysis; rejects L-amino acids rather than detecting D-amino acids in the active site. By recycling D-aminoacyl-tRNA to D-amino acids and free tRNA molecules, this enzyme counteracts the toxicity associated with the formation of D-aminoacyl-tRNA entities in vivo and helps enforce protein L-homochirality. This is D-aminoacyl-tRNA deacylase from Salmonella typhimurium (strain LT2 / SGSC1412 / ATCC 700720).